The primary structure comprises 417 residues: Serine hydroxymethyltransferase 3 (417 aa).

(6S)-5,6,7,8-tetrahydrofolate-binding positions include Leu121 and 125 to 127 (GHL). Lys229 is subject to N6-(pyridoxal phosphate)lysine. Residue 354-356 (SPF) participates in (6S)-5,6,7,8-tetrahydrofolate binding.

The protein belongs to the SHMT family. Homodimer. The cofactor is pyridoxal 5'-phosphate.

The protein resides in the cytoplasm. It catalyses the reaction (6R)-5,10-methylene-5,6,7,8-tetrahydrofolate + glycine + H2O = (6S)-5,6,7,8-tetrahydrofolate + L-serine. Its pathway is one-carbon metabolism; tetrahydrofolate interconversion. It participates in amino-acid biosynthesis; glycine biosynthesis; glycine from L-serine: step 1/1. Its function is as follows. Catalyzes the reversible interconversion of serine and glycine with tetrahydrofolate (THF) serving as the one-carbon carrier. This reaction serves as the major source of one-carbon groups required for the biosynthesis of purines, thymidylate, methionine, and other important biomolecules. Also exhibits THF-independent aldolase activity toward beta-hydroxyamino acids, producing glycine and aldehydes, via a retro-aldol mechanism. This chain is Serine hydroxymethyltransferase 3, found in Pseudomonas aeruginosa (strain ATCC 15692 / DSM 22644 / CIP 104116 / JCM 14847 / LMG 12228 / 1C / PRS 101 / PAO1).